Here is a 297-residue protein sequence, read N- to C-terminus: uncharacterized protein (297 aa).

The next 7 helical transmembrane spans lie at 14–34 (LFLMFIGTVSFLFIFIPFLKF), 55–75 (LLLGPIYGFFAVMLVTLIYFF), 81–101 (FYFGIYSLIPPTLAVISAGAL), 110–130 (AIILIVGLLLFYLTDVGRVAF), 135–155 (LSTLALLLILIFREKISKLLF), 163–183 (IVGATILSFSSVMTDHLYGSI), and 208–228 (LIMTVIGAFFVIFAIEISKCF).

The protein localises to the cell membrane. This is an uncharacterized protein from Methanocaldococcus jannaschii (strain ATCC 43067 / DSM 2661 / JAL-1 / JCM 10045 / NBRC 100440) (Methanococcus jannaschii).